A 120-amino-acid chain; its full sequence is Putative monooxygenase GME11364 (120 aa).

The region spanning 9–99 (VSVHIRLTVD…ILLKPHEVEL (91 aa)) is the ABM domain.

This sequence belongs to the LsrG family.

It functions in the pathway secondary metabolite biosynthesis. Putative monooxygenase; part of the gene cluster that mediates the biosynthesis of dibenzodioxocinones such as pestalotiollide B, a novel class of inhibitors against cholesterol ester transfer protein (CEPT). The biosynthesis initiates from condensation of acetate and malonate units catalyzed by the non-reducing PKS pks8/GME11356. Pks8/GME11356 lacks a thioesterase (TE) domain, which is important to the cyclizing of the third ring of atrochrysone carboxylic acid, and the esterase GME11355 might play the role of TE and catalyzes the cyclization reaction of the C ring. The lactamase-like protein GME11357 (or other beta-lactamases in Pestalotiopsis microspora) probably hydrolyzes the thioester bond between the ACP of pks8/GME11356 and the intermediate to release atrochrysone carboxylic acid, which is spontaneously dehydrates to form endocrocin anthrone. Endocrocin anthrone is further converted to emodin via the endocrocin intermediate. Emodin is then oxidized by several enzymes such as the Baeyer-Villiger oxidase GME11358, the oxidoreductase GME11367, the short chain dehydrogenase/reductase GME11373, as well as by other oxidoreductases from the cluster, to modify the A and C rings and open the B ring, and finally yield monodictyphenone. The prenyltransferase GME11375 may catalyze the addition reaction between the C5 side chains and the carbon bone of dibenzodioxocinones. The remaining biochemical reactions to the final product dibenzodioxocinones should be methylation catalyzed by methyltransferase GME11366 and reduction and lactonization reaction catalyzed by a series of oxidordeuctases. This chain is Putative monooxygenase GME11364, found in Pestalotiopsis microspora.